Reading from the N-terminus, the 213-residue chain is AN1-type zinc finger protein 5 (213 aa).

The A20-type zinc-finger motif lies at 8-42 (TPGPMLCSTGCGFYGNPRTNGMCSVCYKEHLQRQQ). Zn(2+) contacts are provided by Cys14, Cys18, Cys30, and Cys33. A disordered region spans residues 39–149 (QRQQNSGRMS…EEKAPELPKP (111 aa)). The segment covering 40–75 (RQQNSGRMSPMGTASGSNSPTSDSASVQRADTSLNN) has biased composition (polar residues). Ser48 and Ser58 each carry phosphoserine. A compositionally biased stretch (low complexity) spans 120–138 (SEPVVTQPSPSVSQPSTSQ). Positions 139–148 (SEEKAPELPK) are enriched in basic and acidic residues. Residues 148-194 (KPKKNRCFMCRKKVGLTGFDCRCGNLFCGLHRYSDKHNCPYDYKAEA) form an AN1-type zinc finger. Zn(2+) contacts are provided by Cys154, Cys157, Cys168, Cys170, Cys175, His178, His184, and Cys186. Position 209 is an N6-acetyllysine (Lys209).

In terms of assembly, interacts with ubiquitin and polyubiquitinated proteins. Identified in a heterotrimeric complex with ubiquitin and SQSTM1, where ZFAND5 and SQSTM1 both interact with the same ubiquitin molecule. Homooligomer and/or heterooligomer. Interacts (via A20-type domain) with IKBKG and RIPK1 and with TRAF6 (via AN1-type domain). In terms of tissue distribution, highly expressed in skeletal muscle. Expressed in fetal cochlea. Also expressed in infant brain, fetal heart, pancreatic islet, melanocyte, pineal gland, placenta, corneal stroma, and parathyroid tumor. Weakly expressed or undetectable in adult brain, heart, colon, thymus, spleen, kidney, liver, small intestine, placenta, lung and peripheral blood leukocytes. Expressed in rhabdomyosarcoma RD cells (at protein level).

It is found in the cytoplasm. Its function is as follows. Involved in protein degradation via the ubiquitin-proteasome system. May act by anchoring ubiquitinated proteins to the proteasome. Plays a role in ubiquitin-mediated protein degradation during muscle atrophy. Plays a role in the regulation of NF-kappa-B activation and apoptosis. Inhibits NF-kappa-B activation triggered by overexpression of RIPK1 and TRAF6 but not of RELA. Also inhibits tumor necrosis factor (TNF), IL-1 and TLR4-induced NF-kappa-B activation in a dose-dependent manner. Overexpression sensitizes cells to TNF-induced apoptosis. Is a potent inhibitory factor for osteoclast differentiation. In Homo sapiens (Human), this protein is AN1-type zinc finger protein 5 (ZFAND5).